Consider the following 733-residue polypeptide: Catalase-peroxidase (733 aa).

Residues 96-219 (WHSAGTYRTG…LAAVQMGLIY (124 aa)) constitute a cross-link (tryptophyl-tyrosyl-methioninium (Trp-Tyr) (with M-245)). Histidine 97 acts as the Proton acceptor in catalysis. Residues 219 to 245 (YVNPEGPNGNPDPLAAAKDIRETFARM) constitute a cross-link (tryptophyl-tyrosyl-methioninium (Tyr-Met) (with W-96)). Residue histidine 260 participates in heme b binding.

It belongs to the peroxidase family. Peroxidase/catalase subfamily. Homodimer or homotetramer. Requires heme b as cofactor. Formation of the three residue Trp-Tyr-Met cross-link is important for the catalase, but not the peroxidase activity of the enzyme.

The enzyme catalyses H2O2 + AH2 = A + 2 H2O. The catalysed reaction is 2 H2O2 = O2 + 2 H2O. Functionally, bifunctional enzyme with both catalase and broad-spectrum peroxidase activity. In Geobacter sp. (strain M21), this protein is Catalase-peroxidase.